A 673-amino-acid chain; its full sequence is Flotillin family inner membrane protein sll1021 (673 aa).

The helical transmembrane segment at 60–80 (LLFFPVVIIAVIFLILVTIFL) threads the bilayer. A disordered region spans residues 639–673 (LQDPPSVSPPSAAVSEDDWPDLAPPTETNFSPEEI). Over residues 664 to 673 (TETNFSPEEI) the composition is skewed to polar residues.

The protein belongs to the band 7/mec-2 family. Flotillin subfamily. Homooligomerizes.

It is found in the cell inner membrane. It localises to the membrane raft. In terms of biological role, found in functional membrane microdomains (FMM) that may be equivalent to eukaryotic membrane rafts. FMMs are highly dynamic and increase in number as cells age. Flotillins are thought to be important factors in membrane fluidity. The polypeptide is Flotillin family inner membrane protein sll1021 (Synechocystis sp. (strain ATCC 27184 / PCC 6803 / Kazusa)).